Consider the following 163-residue polypeptide: UPF0262 protein RPD_4278 (163 aa).

This sequence belongs to the UPF0262 family.

This chain is UPF0262 protein RPD_4278, found in Rhodopseudomonas palustris (strain BisB5).